We begin with the raw amino-acid sequence, 297 residues long: HTH-type transcriptional regulator ArgP (297 aa).

Residues proline 4 to threonine 60 enclose the HTH lysR-type domain. The segment at residues phenylalanine 21–lysine 40 is a DNA-binding region (H-T-H motif).

It belongs to the LysR transcriptional regulatory family. In terms of assembly, homodimer.

Its function is as follows. Controls the transcription of genes involved in arginine and lysine metabolism. The protein is HTH-type transcriptional regulator ArgP of Salmonella dublin (strain CT_02021853).